The chain runs to 1083 residues: DNA primase (1083 aa).

The CHC2-type zinc-finger motif lies at 1022-1061; sequence CLRYPHRGGRTAPRTFVSLRVDHHNRLCISLAQQCFATKC.

Belongs to the herpesviridae DNA primase family. As to quaternary structure, associates with the helicase and the primase-associated factor to form the helicase-primase factor.

The protein resides in the host nucleus. Functionally, essential component of the helicase/primase complex. Unwinds the DNA at the replication forks and generates single-stranded DNA for both leading and lagging strand synthesis. The primase initiates primer synthesis and thereby produces large amount of short RNA primers on the lagging strand that the polymerase elongates using dNTPs. This is DNA primase from Varicella-zoster virus (strain Oka vaccine) (HHV-3).